The primary structure comprises 259 residues: (3R)-3-hydroxyacyl-CoA dehydrogenase (259 aa).

Residues 13-21 and 40-41 contribute to the NAD(+) site; these read LVTGAGSGI and DL. Position 58 is a phosphoserine (serine 58). Lysine 66 is subject to N6-acetyllysine. 72–74 lines the NAD(+) pocket; the sequence is ADV. Residue serine 154 participates in substrate binding. Lysine 158 is modified (N6-succinyllysine). Tyrosine 167 serves as the catalytic Proton acceptor. NAD(+) is bound by residues 167–171 and 200–202; these read YASSK and IAT. Residue lysine 171 is modified to N6-succinyllysine.

This sequence belongs to the short-chain dehydrogenases/reductases (SDR) family. In terms of assembly, heterotetramer with CBR4; contains two molecules of HSD17B8 and CBR4. As to expression, expressed in ovary at protein level.

It is found in the mitochondrion matrix. The catalysed reaction is a (3R)-3-hydroxyacyl-CoA + NAD(+) = a 3-oxoacyl-CoA + NADH + H(+). It catalyses the reaction 17beta-estradiol + NAD(+) = estrone + NADH + H(+). The enzyme catalyses testosterone + NAD(+) = androst-4-ene-3,17-dione + NADH + H(+). It carries out the reaction 17beta-hydroxy-5alpha-androstan-3-one + NAD(+) = 5alpha-androstan-3,17-dione + NADH + H(+). It functions in the pathway steroid biosynthesis; estrogen biosynthesis. Its pathway is lipid metabolism; fatty acid biosynthesis. It participates in lipid metabolism; mitochondrial fatty acid beta-oxidation. Functionally, required for the solubility and assembly of the heterotetramer 3-ketoacyl-[acyl carrier protein] (ACP) reductase functional complex (KAR or KAR1) that forms part of the mitochondrial fatty acid synthase (mtFAS). Alpha-subunit of the KAR complex that acts as scaffold protein required for the stability of carbonyl reductase type-4 (CBR4, beta-subunit of the KAR complex) and for its 3-ketoacyl-ACP reductase activity, thereby participating in mitochondrial fatty acid biosynthesis. Catalyzes the NAD-dependent conversion of (3R)-3-hydroxyacyl-CoA into 3-ketoacyl-CoA (3-oxoacyl-CoA) with no chain length preference; this enzymatic activity is not needed for the KAR function. Prefers (3R)-3-hydroxyacyl-CoA over (3S)-3-hydroxyacyl-CoA and displays enzymatic activity only in the presence of NAD(+). Cooperates with enoyl-CoA hydratase 1 in mitochondria, together they constitute an alternative route to the auxiliary enzyme pathways for the breakdown of Z-PUFA (cis polyunsaturated fatty acid) enoyl-esters. NAD-dependent 17-beta-hydroxysteroid dehydrogenase with highest activity towards estradiol (17beta-estradiol or E2). Has very low activity towards testosterone and dihydrotestosterone (17beta-hydroxy-5alpha-androstan-3-one). Primarily an oxidative enzyme, it can switch to a reductive mode determined in the appropriate physiologic milieu and catalyze the reduction of estrone (E1) to form biologically active 17beta-estradiol. The sequence is that of (3R)-3-hydroxyacyl-CoA dehydrogenase (Hsd17b8) from Rattus norvegicus (Rat).